A 614-amino-acid polypeptide reads, in one-letter code: Probable NOT transcription complex subunit VIP2 (614 aa).

Disordered regions lie at residues 1 to 46, 58 to 89, and 361 to 391; these read MSNL…NLQG, NMQG…SSGR, and NLGA…GLRP. Over residues 364 to 381 the composition is skewed to polar residues; the sequence is ATYSSHRPQQQPQHTSST.

This sequence belongs to the CNOT2/3/5 family. As to quaternary structure, interacts with Agrobacterium tumefaciens VirE2. Binds to VIP1. Forms a complex made of Agrobacterium VirE2, VIP1, VIP2 and single-stranded DNA (ssDNA).

It localises to the nucleus. Functionally, transcriptional regulator required for Agrobacterium-mediated stable genetic transformation by T-DNA integration in host genome, but not for T-DNA transient expression. The polypeptide is Probable NOT transcription complex subunit VIP2 (VIP2) (Arabidopsis thaliana (Mouse-ear cress)).